A 236-amino-acid chain; its full sequence is Pyridoxine 5'-phosphate synthase (236 aa).

N6 is a binding site for 3-amino-2-oxopropyl phosphate. 8 to 9 is a 1-deoxy-D-xylulose 5-phosphate binding site; it reads DH. R17 provides a ligand contact to 3-amino-2-oxopropyl phosphate. H42 (proton acceptor) is an active-site residue. The 1-deoxy-D-xylulose 5-phosphate site is built by R44 and H49. E69 acts as the Proton acceptor in catalysis. T99 serves as a coordination point for 1-deoxy-D-xylulose 5-phosphate. H190 acts as the Proton donor in catalysis. 3-amino-2-oxopropyl phosphate is bound by residues G191 and 212-213; that span reads GH.

This sequence belongs to the PNP synthase family. In terms of assembly, homooctamer; tetramer of dimers.

It localises to the cytoplasm. It carries out the reaction 3-amino-2-oxopropyl phosphate + 1-deoxy-D-xylulose 5-phosphate = pyridoxine 5'-phosphate + phosphate + 2 H2O + H(+). It participates in cofactor biosynthesis; pyridoxine 5'-phosphate biosynthesis; pyridoxine 5'-phosphate from D-erythrose 4-phosphate: step 5/5. Functionally, catalyzes the complicated ring closure reaction between the two acyclic compounds 1-deoxy-D-xylulose-5-phosphate (DXP) and 3-amino-2-oxopropyl phosphate (1-amino-acetone-3-phosphate or AAP) to form pyridoxine 5'-phosphate (PNP) and inorganic phosphate. The polypeptide is Pyridoxine 5'-phosphate synthase (Prosthecochloris aestuarii (strain DSM 271 / SK 413)).